The sequence spans 215 residues: Large ribosomal subunit protein bL25 (215 aa).

The interval 160–215 (GDLPLPEGSELVTEPEETVMSVVAPETEEEPDTEEDEEGEEDVEEESEEEEEESEE) is disordered. Residues 185–215 (ETEEEPDTEEDEEGEEDVEEESEEEEEESEE) show a composition bias toward acidic residues.

This sequence belongs to the bacterial ribosomal protein bL25 family. CTC subfamily. Part of the 50S ribosomal subunit; part of the 5S rRNA/L5/L18/L25 subcomplex. Contacts the 5S rRNA. Binds to the 5S rRNA independently of L5 and L18.

In terms of biological role, this is one of the proteins that binds to the 5S RNA in the ribosome where it forms part of the central protuberance. In Natranaerobius thermophilus (strain ATCC BAA-1301 / DSM 18059 / JW/NM-WN-LF), this protein is Large ribosomal subunit protein bL25.